The sequence spans 485 residues: NADH-quinone oxidoreductase subunit N (485 aa).

14 helical membrane passes run 8-28, 35-55, 71-91, 105-125, 127-147, 159-179, 203-223, 235-255, 271-291, 297-317, 326-346, 373-393, 408-430, and 455-475; these read LIALLPLLIVGLTVVVVMLSI, FLNATLSVIGLNAALVSLWFV, GFAMLYTGLVLLASLATCTFA, FYLLVLIAALGGILLANANHL, SLFLGIELISLPLFGLVGYAF, YTILSAAASSFLLFGMALVYA, LLAGFGLMIVGLGFKLSLVPF, PAPVSTFLATASKIAIFGVVM, VVLAIIAFASIIFGNLMALSQ, LLGYSSISHLGYLLVALIALQ, VGVYLVGYLFSSLGAFGVVSL, AAVMTVMMLSLAGIPMTLGFI, WWLVGAVVVGSAIGLYYYLRVAV, and IVVLISALLVLVLGVWPQPLI.

It belongs to the complex I subunit 2 family. As to quaternary structure, NDH-1 is composed of 13 different subunits. Subunits NuoA, H, J, K, L, M, N constitute the membrane sector of the complex.

Its subcellular location is the cell inner membrane. It catalyses the reaction a quinone + NADH + 5 H(+)(in) = a quinol + NAD(+) + 4 H(+)(out). In terms of biological role, NDH-1 shuttles electrons from NADH, via FMN and iron-sulfur (Fe-S) centers, to quinones in the respiratory chain. The immediate electron acceptor for the enzyme in this species is believed to be ubiquinone. Couples the redox reaction to proton translocation (for every two electrons transferred, four hydrogen ions are translocated across the cytoplasmic membrane), and thus conserves the redox energy in a proton gradient. This is NADH-quinone oxidoreductase subunit N from Escherichia coli O6:K15:H31 (strain 536 / UPEC).